The chain runs to 442 residues: Urokinase-type plasminogen activator (442 aa).

The N-terminal stretch at 1 to 20 (MRVLRACLSLCVLVVSDSKG) is a signal peptide. The region spanning 29-65 (GASNCGCLNGGKCVSYKYFSNIQRCSCPKKFQGEHCE) is the EGF-like domain. Cystine bridges form between cysteine 33/cysteine 41, cysteine 35/cysteine 53, cysteine 55/cysteine 64, cysteine 72/cysteine 153, cysteine 93/cysteine 135, cysteine 124/cysteine 148, cysteine 179/cysteine 310, cysteine 220/cysteine 236, cysteine 228/cysteine 299, cysteine 324/cysteine 393, cysteine 356/cysteine 372, and cysteine 383/cysteine 411. Residues 36 to 59 (LNGGKCVSYKYFSNIQRCSCPKKF) form a binds urokinase plasminogen activator surface receptor region. The 82-residue stretch at 72–153 (CFEGNGHSYR…LVQECMVPNC (82 aa)) folds into the Kringle domain. Residue asparagine 152 is glycosylated (N-linked (GlcNAc...) asparagine). Positions 154–189 (SGGESHRPAYDGKNPFSTPEKVEFQCGQKALRPRFK) are connecting peptide. Residues 190–435 (IVGGKSTTIE…FLTWIHTHVG (246 aa)) form the Peptidase S1 domain. Catalysis depends on charge relay system residues histidine 235 and aspartate 286. The active-site Charge relay system is serine 387.

Belongs to the peptidase S1 family. As to quaternary structure, found in high and low molecular mass forms. Each consists of two chains, A and B. The high molecular mass form contains a long chain A which is cleaved to yield a short chain A. Forms heterodimer with SERPINA5. Binds LRP1B; binding is followed by internalization and degradation. Interacts with MRC2. Interacts with PLAUR. In complex with SERPINE1, interacts with PLAUR/uPAR. Interacts with SORL1 and LRP1, either alone or in complex with SERPINE1; these interactions are abolished in the presence of LRPAP1/RAP. The ternary complex composed of PLAUR-PLAU-PAI1 also interacts with SORLA. Post-translationally, produced as an inactive single-chain protein (pro-uPA or sc-uPA), is processed into the active disulfide-linked two-chain form of PLAU/uPA by a proteolytic event mediated, at least, by TMPRSS4.

It localises to the secreted. It carries out the reaction Specific cleavage of Arg-|-Val bond in plasminogen to form plasmin.. Its activity is regulated as follows. Inhibited by SERPINA5. Inhibited by SERPINE1. Its function is as follows. Specifically cleaves the zymogen plasminogen to form the active enzyme plasmin. In Sus scrofa (Pig), this protein is Urokinase-type plasminogen activator (PLAU).